A 432-amino-acid polypeptide reads, in one-letter code: Enolase (432 aa).

Gln-167 contributes to the (2R)-2-phosphoglycerate binding site. The active-site Proton donor is the Glu-209. Asp-246, Glu-287, and Asp-314 together coordinate Mg(2+). (2R)-2-phosphoglycerate-binding residues include Lys-339, Arg-368, Ser-369, and Lys-390. The active-site Proton acceptor is Lys-339.

It belongs to the enolase family. Mg(2+) is required as a cofactor.

It localises to the cytoplasm. The protein resides in the secreted. Its subcellular location is the cell surface. The catalysed reaction is (2R)-2-phosphoglycerate = phosphoenolpyruvate + H2O. It functions in the pathway carbohydrate degradation; glycolysis; pyruvate from D-glyceraldehyde 3-phosphate: step 4/5. Functionally, catalyzes the reversible conversion of 2-phosphoglycerate (2-PG) into phosphoenolpyruvate (PEP). It is essential for the degradation of carbohydrates via glycolysis. This chain is Enolase, found in Prochlorococcus marinus (strain SARG / CCMP1375 / SS120).